Reading from the N-terminus, the 501-residue chain is Probable cysteine desulfurase, mitochondrial (501 aa).

Pyridoxal 5'-phosphate-binding positions include 172–173 (AT), Asn-252, Gln-280, and 300–302 (SAH). Lys-303 carries the N6-(pyridoxal phosphate)lysine modification. Thr-340 serves as a coordination point for pyridoxal 5'-phosphate. Cys-425 acts as the Cysteine persulfide intermediate in catalysis. Residue Cys-425 participates in [2Fe-2S] cluster binding.

The protein belongs to the class-V pyridoxal-phosphate-dependent aminotransferase family. NifS/IscS subfamily. Pyridoxal 5'-phosphate is required as a cofactor.

It localises to the mitochondrion. The catalysed reaction is (sulfur carrier)-H + L-cysteine = (sulfur carrier)-SH + L-alanine. Functionally, catalyzes the removal of elemental sulfur from cysteine to produce alanine. It supplies the inorganic sulfur for iron-sulfur (Fe-S) clusters. Plays a role in both tRNA-processing and mitochondrial metabolism. Involved in the 2-thio-modification of both 5-carboxymethylaminomethyl-2-thiouridine in mitochondrial tRNAs and 5-methoxycarbonylmethyl-2-thiouridine (mcm5s2U) in cytoplasmic tRNAs. This Schizosaccharomyces pombe (strain 972 / ATCC 24843) (Fission yeast) protein is Probable cysteine desulfurase, mitochondrial.